The following is a 169-amino-acid chain: Putative phosphoesterase SE_0715 (169 aa).

Residue histidine 34 is the Proton donor of the active site. Short sequence motifs (HXTX) lie at residues 34–37 (HITI) and 115–118 (HFTI). Histidine 115 serves as the catalytic Proton acceptor.

This sequence belongs to the 2H phosphoesterase superfamily. YjcG family.

The sequence is that of Putative phosphoesterase SE_0715 from Staphylococcus epidermidis (strain ATCC 12228 / FDA PCI 1200).